Here is a 425-residue protein sequence, read N- to C-terminus: Serine--tRNA ligase (425 aa).

An L-serine-binding site is contributed by 230 to 232 (TAE). Position 261–263 (261–263 (RSE)) interacts with ATP. An L-serine-binding site is contributed by glutamate 284. 348 to 351 (EISS) lines the ATP pocket. Serine 384 contributes to the L-serine binding site.

It belongs to the class-II aminoacyl-tRNA synthetase family. Type-1 seryl-tRNA synthetase subfamily. In terms of assembly, homodimer. The tRNA molecule binds across the dimer.

It localises to the cytoplasm. It catalyses the reaction tRNA(Ser) + L-serine + ATP = L-seryl-tRNA(Ser) + AMP + diphosphate + H(+). The catalysed reaction is tRNA(Sec) + L-serine + ATP = L-seryl-tRNA(Sec) + AMP + diphosphate + H(+). It participates in aminoacyl-tRNA biosynthesis; selenocysteinyl-tRNA(Sec) biosynthesis; L-seryl-tRNA(Sec) from L-serine and tRNA(Sec): step 1/1. Its function is as follows. Catalyzes the attachment of serine to tRNA(Ser). Is also able to aminoacylate tRNA(Sec) with serine, to form the misacylated tRNA L-seryl-tRNA(Sec), which will be further converted into selenocysteinyl-tRNA(Sec). This chain is Serine--tRNA ligase, found in Streptococcus pyogenes serotype M6 (strain ATCC BAA-946 / MGAS10394).